We begin with the raw amino-acid sequence, 324 residues long: Lactonase drp35 (324 aa).

Ca(2+) is bound by residues Glu47, Ser109, Gly111, Asp129, Thr132, Tyr134, Asp137, Asn184, Asp235, and Ser236. Asp235 (proton donor) is an active-site residue.

The protein belongs to the SMP-30/CGR1 family. The cofactor is Ca(2+).

The protein localises to the cytoplasm. In terms of biological role, exhibits lactonase activity. Acts in cells with perturbed membrane integrity and is possibly related to the membrane homeostasis. This chain is Lactonase drp35 (drp35), found in Staphylococcus aureus (strain bovine RF122 / ET3-1).